The following is a 384-amino-acid chain: Dual-specificity RNA methyltransferase RlmN (384 aa).

The Proton acceptor role is filled by Glu105. Positions 111 to 350 constitute a Radical SAM core domain; that stretch reads EDDRATLCVS…TIVRKTRGDD (240 aa). A disulfide bond links Cys118 and Cys355. [4Fe-4S] cluster contacts are provided by Cys125, Cys129, and Cys132. S-adenosyl-L-methionine contacts are provided by residues 179 to 180, Ser211, 233 to 235, and Asn312; these read GE and SLH. The active-site S-methylcysteine intermediate is Cys355.

It belongs to the radical SAM superfamily. RlmN family. It depends on [4Fe-4S] cluster as a cofactor.

It localises to the cytoplasm. It carries out the reaction adenosine(2503) in 23S rRNA + 2 reduced [2Fe-2S]-[ferredoxin] + 2 S-adenosyl-L-methionine = 2-methyladenosine(2503) in 23S rRNA + 5'-deoxyadenosine + L-methionine + 2 oxidized [2Fe-2S]-[ferredoxin] + S-adenosyl-L-homocysteine. It catalyses the reaction adenosine(37) in tRNA + 2 reduced [2Fe-2S]-[ferredoxin] + 2 S-adenosyl-L-methionine = 2-methyladenosine(37) in tRNA + 5'-deoxyadenosine + L-methionine + 2 oxidized [2Fe-2S]-[ferredoxin] + S-adenosyl-L-homocysteine. Its function is as follows. Specifically methylates position 2 of adenine 2503 in 23S rRNA and position 2 of adenine 37 in tRNAs. m2A2503 modification seems to play a crucial role in the proofreading step occurring at the peptidyl transferase center and thus would serve to optimize ribosomal fidelity. In Escherichia coli O17:K52:H18 (strain UMN026 / ExPEC), this protein is Dual-specificity RNA methyltransferase RlmN.